The primary structure comprises 303 residues: Recombination-associated protein RdgC (303 aa).

It belongs to the RdgC family.

It localises to the cytoplasm. The protein localises to the nucleoid. In terms of biological role, may be involved in recombination. In Serratia proteamaculans (strain 568), this protein is Recombination-associated protein RdgC.